The sequence spans 299 residues: Mycothiol acetyltransferase (299 aa).

N-acetyltransferase domains are found at residues Met1–Gly156 and Val149–Leu299. Glu33 is a binding site for 1D-myo-inositol 2-(L-cysteinylamino)-2-deoxy-alpha-D-glucopyranoside. Acetyl-CoA contacts are provided by residues Leu75 to Val77 and Arg83 to Thr88. 1D-myo-inositol 2-(L-cysteinylamino)-2-deoxy-alpha-D-glucopyranoside contacts are provided by Glu176, Lys218, and Glu231. Acetyl-CoA is bound by residues Val235 to Ile237 and Gln242 to Arg248. Tyr269 is a 1D-myo-inositol 2-(L-cysteinylamino)-2-deoxy-alpha-D-glucopyranoside binding site. Residue Asn274–His279 coordinates acetyl-CoA.

This sequence belongs to the acetyltransferase family. MshD subfamily. As to quaternary structure, monomer.

The enzyme catalyses 1D-myo-inositol 2-(L-cysteinylamino)-2-deoxy-alpha-D-glucopyranoside + acetyl-CoA = mycothiol + CoA + H(+). Catalyzes the transfer of acetyl from acetyl-CoA to desacetylmycothiol (Cys-GlcN-Ins) to form mycothiol. The polypeptide is Mycothiol acetyltransferase (Rhodococcus erythropolis (strain PR4 / NBRC 100887)).